Consider the following 93-residue polypeptide: UPF0728 protein C10orf53 homolog (93 aa).

The protein belongs to the UPF0728 family.

The protein is UPF0728 protein C10orf53 homolog of Xenopus tropicalis (Western clawed frog).